Consider the following 85-residue polypeptide: Putative N.vectensis toxin 1 9 (85 aa).

A signal peptide spans 1 to 20 (MASFKIVIVCLALLVAVASA). A propeptide spanning residues 21 to 36 (RRRDMMSDDELDYHFS) is cleaved from the precursor. 3 cysteine pairs are disulfide-bonded: C42/C82, C44/C72, and C65/C83.

It belongs to the sea anemone sodium channel inhibitory toxin family. Type II subfamily. Expressed in ectodermal glands and in clumps outside of the extodermal layer. Is not expressed in nematocytes. In adult female tissues, shows similar expression levels in mesenteries (gametes-producing tissue), tentacles, pharynx and physa.

It localises to the secreted. Its function is as follows. Binds to site 3 of voltage-gated sodium channels and inhibits the inactivation process. Is highly active on DmNav1/TipE (drosophila) and is only extremely weakly active on rat Nav1.4-beta-1/SCN4A-SCN1B, and on human Nav1.5-beta-1/SCN5A-beta-1. This reveals high specificity for arthropod over mammalian channels. In vivo, when released into the medium, this recombinant toxin induces impaired swimming, paralysis and death of the crustacean A.nauplii within several hours. Also causes paralysis of cherry shrimps immediately after injection at very low doses. Its effect on zebrafish (D.rerio) larvae is also rapid, since it induces tail twitching accompanied by impaired swimming after 20 minutes and complete paralysis within 45 minutes. It has also been observed to cause death of zebrafish larvae within 1 hour. This chain is Putative N.vectensis toxin 1 9, found in Nematostella vectensis (Starlet sea anemone).